The sequence spans 438 residues: Glycerol-3-phosphate acyltransferase 3 (438 aa).

Residues 14-34 (WLTLVGGLILLPSAFGLSLGI) form a helical membrane-spanning segment. Phosphoserine is present on residues S68 and S77. The next 2 membrane-spanning stretches (helical) occupy residues 137-157 (ISPRLTMVWVLGVLVRYCFLL) and 161-181 (VTLAFIGISLLIIGTTLVGQL). The short motif at 229-234 (HTSPID) is the HXXXXD motif element.

This sequence belongs to the 1-acyl-sn-glycerol-3-phosphate acyltransferase family. As to expression, most abundant in epididymal fat, followed by small intestine, brown adipose tissue, kidney, heart and colon.

The protein resides in the endoplasmic reticulum membrane. It carries out the reaction sn-glycerol 3-phosphate + an acyl-CoA = a 1-acyl-sn-glycero-3-phosphate + CoA. The enzyme catalyses a 1-acyl-sn-glycero-3-phosphate + an acyl-CoA = a 1,2-diacyl-sn-glycero-3-phosphate + CoA. It catalyses the reaction dodecanoyl-CoA + sn-glycerol 3-phosphate = 1-dodecanoyl-sn-glycerol 3-phosphate + CoA. The catalysed reaction is sn-glycerol 3-phosphate + hexadecanoyl-CoA = 1-hexadecanoyl-sn-glycero-3-phosphate + CoA. It carries out the reaction sn-glycerol 3-phosphate + (9Z)-octadecenoyl-CoA = 1-(9Z-octadecenoyl)-sn-glycero-3-phosphate + CoA. The enzyme catalyses (9Z,12Z)-octadecadienoyl-CoA + sn-glycerol 3-phosphate = 1-(9Z,12Z)-octadecadienoyl-sn-glycero-3-phosphate + CoA. It catalyses the reaction 1-tetradecanoyl-sn-glycerol 3-phosphate + (9Z)-octadecenoyl-CoA = 1-tetradecanoyl-2-(9Z)-octadecenoyl-sn-glycero-3-phosphate + CoA. The catalysed reaction is 1-hexadecanoyl-sn-glycero-3-phosphate + (9Z)-octadecenoyl-CoA = 1-hexadecanoyl-2-(9Z-octadecenoyl)-sn-glycero-3-phosphate + CoA. It carries out the reaction 1-(9Z-octadecenoyl)-sn-glycero-3-phosphate + (9Z)-octadecenoyl-CoA = 1,2-di-(9Z-octadecenoyl)-sn-glycero-3-phosphate + CoA. The enzyme catalyses 1-(6Z,9Z,12Z-octadecatrienoyl)-sn-glycero-3-phosphate + (9Z)-octadecenoyl-CoA = (6Z,9Z,12Z)-octadecatrienoyl-2-(9Z)-octadecenoyl-sn-glycero-3-phosphate + CoA. It catalyses the reaction 1-(9Z,12Z,15Z)-octadecatrienoyl-sn-glycero-3-phosphate + (9Z)-octadecenoyl-CoA = 1-(9Z,12Z,15Z)-octadecatrienoyl-2-(9Z)-octadecenoyl-sn-glycero-3-phosphate + CoA. The catalysed reaction is 1-(9Z-octadecenoyl)-sn-glycero-3-phosphate + tetradecanoyl-CoA = 1-(9Z)-octadecenoyl-2-tetradecanoyl-sn-glycero-3-phosphate + CoA. It carries out the reaction 1-(9Z-octadecenoyl)-sn-glycero-3-phosphate + hexadecanoyl-CoA = 1-(9Z)-octadecenoyl-2-hexadecanoyl-sn-glycero-3-phosphate + CoA. The enzyme catalyses 1-(9Z-octadecenoyl)-sn-glycero-3-phosphate + octadecanoyl-CoA = 1-(9Z-octadecenoyl)-2-octadecanoyl-sn-glycero-3-phosphate + CoA. It catalyses the reaction 1-(9Z-octadecenoyl)-sn-glycero-3-phosphate + (9Z,12Z)-octadecadienoyl-CoA = 1-(9Z)-octadecenoyl-2-(9Z,12Z)-octadecadienoyl-sn-glycero-3-phosphate + CoA. The catalysed reaction is 1-(5Z,8Z,11Z,14Z-eicosatetraenoyl)-sn-glycero-3-phosphate + (9Z)-octadecenoyl-CoA = 1-(5Z,8Z,11Z,14Z)-eicosatetraenoyl-2-(9Z)-octadecenoyl-sn-glycero-3-phosphate + CoA. It participates in glycerolipid metabolism; triacylglycerol biosynthesis. Its pathway is phospholipid metabolism; CDP-diacylglycerol biosynthesis; CDP-diacylglycerol from sn-glycerol 3-phosphate: step 1/3. Its function is as follows. Converts glycerol-3-phosphate to 1-acyl-sn-glycerol-3-phosphate (lysophosphatidic acid or LPA) by incorporating an acyl moiety at the sn-1 position of the glycerol backbone. Also converts LPA into 1,2-diacyl-sn-glycerol-3-phosphate (phosphatidic acid or PA) by incorporating an acyl moiety at the sn-2 position of the glycerol backbone. Protects cells against lipotoxicity. This Mus musculus (Mouse) protein is Glycerol-3-phosphate acyltransferase 3.